Consider the following 164-residue polypeptide: Putative 4-hydroxy-4-methyl-2-oxoglutarate aldolase (164 aa).

Substrate is bound by residues 74-77 and Arg96; that span reads GGNL. Asp97 contributes to the a divalent metal cation binding site.

The protein belongs to the class II aldolase/RraA-like family. In terms of assembly, homotrimer. The cofactor is a divalent metal cation.

The enzyme catalyses 4-hydroxy-4-methyl-2-oxoglutarate = 2 pyruvate. It catalyses the reaction oxaloacetate + H(+) = pyruvate + CO2. In terms of biological role, catalyzes the aldol cleavage of 4-hydroxy-4-methyl-2-oxoglutarate (HMG) into 2 molecules of pyruvate. Also contains a secondary oxaloacetate (OAA) decarboxylase activity due to the common pyruvate enolate transition state formed following C-C bond cleavage in the retro-aldol and decarboxylation reactions. The protein is Putative 4-hydroxy-4-methyl-2-oxoglutarate aldolase of Thermus thermophilus (strain ATCC BAA-163 / DSM 7039 / HB27).